The primary structure comprises 446 residues: MNAKEANFDGLVGPTHNYAGLSFGNVASLSNEKSDANPKAAAKQGLRKMKQLADLGFAQGVLPPQERPSLRLLRELGFSGKDADVIAKAARQAPELLAAASSASAMWTANAATVSPSADTGDARVHFTPANLCSKLHRAIEHESTRRTLAAIFADEARFAVHDALPGTPALGDEGAANHTRFCAEYGAPGVEFFVYGRAEYRRGPEPTRFPARQTFEASRAVAHRHGLREEATIYAQQRPDVIDAGVFHNDVIAVGNRDTLFCHEHAFVDPQAVYDALAASLGALGAQLNVIEVPDRAVSVADAVGSYLFNSQLLAREDGTQMLVVPQECRENANVAAYLDALVAGNGPIRDVRVFDLRESMKNGGGPACLRLRVVLNDAERAAVKPNVWIGDALFASLDAWIDKHYRDRLSPVDLADPALLDESRTALDELTQILGLGSLYDFQR.

Substrate is bound by residues 19-28, Asn110, and 137-138; these read AGLSFGNVAS and HR. Glu174 is a catalytic residue. Substrate is bound at residue Arg213. His249 is a catalytic residue. 2 residues coordinate substrate: Asp251 and Asn364. The Nucleophile role is filled by Cys370.

Belongs to the succinylarginine dihydrolase family. Homodimer.

The enzyme catalyses N(2)-succinyl-L-arginine + 2 H2O + 2 H(+) = N(2)-succinyl-L-ornithine + 2 NH4(+) + CO2. It participates in amino-acid degradation; L-arginine degradation via AST pathway; L-glutamate and succinate from L-arginine: step 2/5. In terms of biological role, catalyzes the hydrolysis of N(2)-succinylarginine into N(2)-succinylornithine, ammonia and CO(2). This Burkholderia pseudomallei (strain 668) protein is N-succinylarginine dihydrolase.